The primary structure comprises 549 residues: MSRKVRAPRGTDLHCKGWQQEGPMRMLMNNLDPEVAEKPEELIVYGGSGKAARNWEAFDAIVKSLQELEDDETLLVQSGKPVGVFKTHSQAPRVLIANSLLVPSWADWDQFRELEKQGLTMYGQMTAGSWIYIGTQGILQGTYETFGAAADKHYNGDLSGKFVLTAGLGGMGGAQPLAVTMNNGVVLCVEVDRERIERRIDYQYLDKMAENLDEALELVDEAVSEKKPLSIGLLGNAASIYPELVKRGRIPDMVTDQTSAHDILNGYVPADLDFPYALELRHQDPEKYMKLSKSSIAKHVEAMLEFQKQGAIVFDYGNNIRQQAYIEGITKAFDFPGFVPAYIRPQFCEGKGPFRWVALSGDPEDIYRTDRLILEEFSDNEHLCRWIKMAGEQVSFQGLPSRICWLGYGERARFGKLINDLVAKGEIKAPIVIGRDHLDCGSVASPNRETEGMKDGSDAIADWPILNALINTAAGAHWVSVHHGGGVGIGYSLHAGIVVMADGSKDAEERLERVLTSDPGTGIIRHVDAGYELAKKTASEQGVNIPMWS.

NAD(+) contacts are provided by residues 46 to 47 (GG), glutamine 124, 170 to 172 (GMG), glutamate 190, arginine 195, 236 to 237 (NA), 257 to 261 (QTSAH), 267 to 268 (YV), and tyrosine 316. The active site involves cysteine 404. Residue glycine 486 participates in NAD(+) binding.

Belongs to the urocanase family. NAD(+) serves as cofactor.

The protein localises to the cytoplasm. It carries out the reaction 4-imidazolone-5-propanoate = trans-urocanate + H2O. It participates in amino-acid degradation; L-histidine degradation into L-glutamate; N-formimidoyl-L-glutamate from L-histidine: step 2/3. Its function is as follows. Catalyzes the conversion of urocanate to 4-imidazolone-5-propionate. The chain is Urocanate hydratase from Natranaerobius thermophilus (strain ATCC BAA-1301 / DSM 18059 / JW/NM-WN-LF).